Here is a 1472-residue protein sequence, read N- to C-terminus: Vacuolar cation-transporting ATPase YPK9 (1472 aa).

N-acetylmethionine is present on Met1. Polar residues-rich tracts occupy residues 1 to 12 (MDIPSSNQIQHG) and 72 to 87 (SFQS…SGNL). Disordered stretches follow at residues 1 to 32 (MDIP…TATT), 71 to 115 (HSFQ…SRNP), and 179 to 273 (AKSY…DDVH). Residues 1-293 (MDIPSSNQIQ…YHEKFYPQYA (293 aa)) lie on the Cytoplasmic side of the membrane. The residue at position 95 (Thr95) is a Phosphothreonine. Low complexity-rich tracts occupy residues 103-115 (SSAE…SRNP) and 211-222 (SATHSSSSLSRY). Ser108 is modified (phosphoserine). The segment covering 234 to 243 (SQTDEILEDE) has biased composition (acidic residues). A helical membrane pass occupies residues 294-315 (PNLHYQRFYIAEEDLVIGIAAY). The Vacuolar portion of the chain corresponds to 316–321 (QTSKFW). The helical transmembrane segment at 322-344 (YIIYNLCCFLTFGLVYLLTRWLP) threads the bilayer. The Cytoplasmic segment spans residues 345–488 (HLKVKLYGVK…INLRMKTTSE (144 aa)). A helical transmembrane segment spans residues 489–511 (ILFNEVLHPFYVFQVFSIILWGI). Residues 512–514 (DEY) lie on the Vacuolar side of the membrane. Residues 515-533 (YYYAACIFLISVLSIFDSL) traverse the membrane as a helical segment. Residues 534-693 (NEQKKVSRNL…PTGFKFYRDS (160 aa)) lie on the Cytoplasmic side of the membrane. Residues 694–713 (FKYIGFMSLIAIFGFCVSCV) traverse the membrane as a helical segment. Residues 714-726 (QFIKLGLDKKTMI) lie on the Vacuolar side of the membrane. Residues 727-748 (LRALDIITIVVPPALPATLTIG) traverse the membrane as a helical segment. Topologically, residues 749 to 1244 (TNFALSRLKE…ALVTSFACFQ (496 aa)) are cytoplasmic. The active-site 4-aspartylphosphate intermediate is the Asp781. 2 positions are modified to phosphoserine: Ser1117 and Ser1120. Mg(2+) is bound by residues Asp1187 and Asp1191. Residues 1245–1264 (YMSLYSAIQFITITILYSRG) form a helical membrane-spanning segment. The Vacuolar segment spans residues 1265 to 1271 (SNLGDFQ). The chain crosses the membrane as a helical span at residues 1272–1289 (FLYIDLLLIVPIAICMSW). Residues 1290–1307 (SKSYEKIDKKRPSANLVS) lie on the Cytoplasmic side of the membrane. The helical transmembrane segment at 1308–1331 (PKILVPLLISVFLVFLFQFIPWII) threads the bilayer. Over 1332–1351 (VQKMSWYIKPIVGGDDAVQS) the chain is Vacuolar. A helical transmembrane segment spans residues 1352–1374 (SDNTVLFFVSNFQYILTAIVLSV). The Cytoplasmic segment spans residues 1375–1387 (GPPYREPMSKNFE). Residues 1388–1407 (FIVDITVSIGASLLLMTLDT) form a helical membrane-spanning segment. Residues 1408-1423 (ESYLGKMLQLTPISNS) are Vacuolar-facing. The helical transmembrane segment at 1424 to 1446 (FTMFIIVWVILNYYAQLYIPPSI) threads the bilayer. Topologically, residues 1447–1472 (KGWLKKKKSSKKYKLLIQEEMKLKEV) are cytoplasmic.

Belongs to the cation transport ATPase (P-type) (TC 3.A.3) family. Type V subfamily.

The protein resides in the vacuole membrane. It catalyses the reaction ATP + H2O = ADP + phosphate + H(+). In terms of biological role, vacuolar transporter which plays a role in sequestration of divalent heavy metal ions. This is Vacuolar cation-transporting ATPase YPK9 (YPK9) from Saccharomyces cerevisiae (strain ATCC 204508 / S288c) (Baker's yeast).